Here is a 203-residue protein sequence, read N- to C-terminus: Glycerol-3-phosphate acyltransferase (203 aa).

4 consecutive transmembrane segments (helical) span residues 4–24 (LTFAMSGIAYLLGSVSNAVLI), 68–88 (IPVYLAWYLGIPPLYLGFIGI), 104–124 (GGKGVATALGALLPLGLDMGS), and 125–145 (FMIVTWLIVLLFTGYSSLAAI).

The protein belongs to the PlsY family. As to quaternary structure, probably interacts with PlsX.

The protein resides in the cell inner membrane. It catalyses the reaction an acyl phosphate + sn-glycerol 3-phosphate = a 1-acyl-sn-glycero-3-phosphate + phosphate. It functions in the pathway lipid metabolism; phospholipid metabolism. Catalyzes the transfer of an acyl group from acyl-phosphate (acyl-PO(4)) to glycerol-3-phosphate (G3P) to form lysophosphatidic acid (LPA). This enzyme utilizes acyl-phosphate as fatty acyl donor, but not acyl-CoA or acyl-ACP. The chain is Glycerol-3-phosphate acyltransferase from Tolumonas auensis (strain DSM 9187 / NBRC 110442 / TA 4).